The chain runs to 224 residues: MMRVLVVEDNALLRHHLKVQLQDSGHQVDATEDAREADYYLNEHLPDIAIVDLGLPDEDGLSLIRRWRSSDISLPVLVLTAREGWQDKVEVLSSGADDYVTKPFHIEEVMARMQALMRRNSGLASQVINIPPFQVDLSRRELSVNEEVIKLTAFEYTIMETLIRNNGKVVSKDSLMLQLYPDAELRESHTIDVLMGRLRKKIQAQYPHDVITTVRGQGYLFELR.

A Response regulatory domain is found at 3-117 (RVLVVEDNAL…EVMARMQALM (115 aa)). Aspartate 52 carries the post-translational modification 4-aspartylphosphate. A DNA-binding region (ompR/PhoB-type) is located at residues 125–223 (SQVINIPPFQ…VRGQGYLFEL (99 aa)).

Phosphorylated by PhoQ.

The protein resides in the cytoplasm. Member of the two-component regulatory system PhoQ/PhoP which regulates the expression of genes involved in virulence and resistance to host defense antimicrobial peptides. The protein is Virulence transcriptional regulatory protein PhoP (phoP) of Salmonella choleraesuis (strain SC-B67).